The sequence spans 171 residues: Photosystem I assembly protein Ycf3 (171 aa).

TPR repeat units lie at residues 35–68 (AFTY…EIDP), 72–105 (SYIL…NPSL), and 120–153 (GEQA…APNN).

The protein belongs to the Ycf3 family.

It localises to the plastid. Its subcellular location is the chloroplast thylakoid membrane. Essential for the assembly of the photosystem I (PSI) complex. May act as a chaperone-like factor to guide the assembly of the PSI subunits. The protein is Photosystem I assembly protein Ycf3 of Psilotum nudum (Whisk fern).